A 543-amino-acid polypeptide reads, in one-letter code: ADP,ATP carrier protein 3 (543 aa).

The next 10 membrane-spanning stretches (helical) occupy residues 46 to 66, 86 to 106, 111 to 131, 175 to 195, 209 to 229, 243 to 263, 306 to 326, 346 to 366, 382 to 402, and 504 to 524; these read VLYL…MGNL, IFLP…LSLF, MFDI…LVVW, FLFL…FNIF, ISVY…LTLV, ELGF…ILAL, LLIA…LVEA, FANF…LVVI, LASL…LIAF, and SVSG…LKYL.

This sequence belongs to the ADP/ATP translocase tlc family.

It localises to the mitosome membrane. ATP transporter involved in the uptake of ATP from the parasite cell cytoplasm into the mitosome matrix. Equilibrates nucleotide pools across a concentration gradient between both sides of the mitosome membrane. In Encephalitozoon cuniculi (strain GB-M1) (Microsporidian parasite), this protein is ADP,ATP carrier protein 3 (NTT3).